The sequence spans 408 residues: MVFISTKEFNNMEYGTILINAIDAIDSDNNSKLLIDDQVVEIFRKESSSYEHTDHGRLIIVVVENSRKIERRSPTFSYSEKGKGIPFKIDKIPFEFKKKKFIDNLSSMSYHEISLKYNDDDKPNQVVLRHFYKNSLQMGFFNCTLLFRSSPKTTSKTFTKRPELMLTIVDSSGQLIKTIYINRDENNNNSNNNNNNNSNNNSSILFNSSDSLETTLTTSSSSSTSTNQNSNSFNNLLSLLPSLNLQIQSQLINNNKTNNNNNCDVIINNDNGNNNNNNNNNNNNNNNNNNNNNNNNNNNNNNNNNNNNNNNNNSSDSIIVNDNYFNNDNSNDIIVNVNNNFNNNNPNCNIDNGNFIYFNNHDNDNNNKLDYYDELYSIYNIGGQTFDYDICNINNNYFNFNEINMIQN.

Disordered stretches follow at residues 184-206 and 254-317; these read DENNNNSNNNNNNNSNNNSSILF and NNKT…SSDS. Residues 187–206 show a composition bias toward low complexity; that stretch reads NNNSNNNNNNNSNNNSSILF.

This is an uncharacterized protein from Dictyostelium discoideum (Social amoeba).